Consider the following 828-residue polypeptide: MKLSRRSFMKANAVAAAAAAAGLSVPGVARAVVGQQEAIKWDKAPCRFCGTGCGVLVGTQQGRVVACQGDPDAPVNRGLNCIKGYFLPKIMYGKDRLTQPLLRMKNGKYDKEGEFTPITWDQAFDVMEEKFKTALKEKGPESIGMFGSGQWTIWEGYAASKLFKAGFRSNNIDPNARHCMASAVVGFMRTFGMDEPMGCYDDIEQADAFVLWGANMAEMHPILWSRITNRRLSNQNVTVAVLSTYQHRSFELADNGIIFTPQSDLVILNYIANYIIQNNAINQDFFSKHVNLRKGATDIGYGLRPTHPLEKAAKNPGSDASEPMSFEDYKAFVAEYTLEKTAEMTGVPKDQLEQLAQLYADPNKKVISYWTMGFNQHTRGVWANNLVYNLHLLTGKISQPGCGPFSLTGQPSACGTAREVGTFAHRLPADMVVTNEKHRDICEKKWNIPSGTIPAKIGLHAVAQDRALKDGKLNVYWTMCTNNMQAGPNINEERMPGWRDPRNFIIVSDPYPTVSALAADLILPTAMWVEKEGAYGNAERRTQFWRQQVQAPGEAKSDLWQLVQFSRRFKTEEVWPEELLAKKPELRGKTLYEVLYATPEVSKFPLSELAEDQLNDESRELGFYLQKGLFEEYAWFGRGHGHDLAPFDDYHKARGLRWPVVNGKETQWRYSEGNDPYVKAGEGYKFYGKPDGKAVIFALPFEPAAEAPDEEYDLWLSTGRVLEHWHTGSMTRRVPELHRAFPEAVLFIHPLDAKARDLRRGDKVKVVSRRGEVISIVETRGRNRPPQGLVYMPFFDAAQLVNKLTLDATDPLSKETDFKKCAVKLEKV.

Positions 1 to 31 (MKLSRRSFMKANAVAAAAAAAGLSVPGVARA) form a signal peptide, tat-type signal. In terms of domain architecture, 4Fe-4S Mo/W bis-MGD-type spans 39–95 (IKWDKAPCRFCGTGCGVLVGTQQGRVVACQGDPDAPVNRGLNCIKGYFLPKIMYGKD). 4 residues coordinate [4Fe-4S] cluster: C46, C49, C53, and C81. Residues K83, Q150, N175, C179, 212–219 (WGANMAEM), 243–247 (STYQH), 262–264 (QSD), M372, Q376, N482, 508–509 (SD), K531, D558, and 718–727 (TGRVLEHWHT) each bind Mo-bis(molybdopterin guanine dinucleotide). F794 provides a ligand contact to substrate. The Mo-bis(molybdopterin guanine dinucleotide) site is built by N802 and K819.

The protein belongs to the prokaryotic molybdopterin-containing oxidoreductase family. NasA/NapA/NarB subfamily. In terms of assembly, component of the periplasmic nitrate reductase NapAB complex composed of NapA and NapB. Requires [4Fe-4S] cluster as cofactor. It depends on Mo-bis(molybdopterin guanine dinucleotide) as a cofactor. Post-translationally, predicted to be exported by the Tat system. The position of the signal peptide cleavage has not been experimentally proven.

It is found in the periplasm. The enzyme catalyses 2 Fe(II)-[cytochrome] + nitrate + 2 H(+) = 2 Fe(III)-[cytochrome] + nitrite + H2O. In terms of biological role, catalytic subunit of the periplasmic nitrate reductase complex NapAB. Receives electrons from NapB and catalyzes the reduction of nitrate to nitrite. The chain is Periplasmic nitrate reductase from Escherichia coli O6:K15:H31 (strain 536 / UPEC).